Consider the following 91-residue polypeptide: Small ribosomal subunit protein bS16 (91 aa).

This sequence belongs to the bacterial ribosomal protein bS16 family.

The chain is Small ribosomal subunit protein bS16 from Phytoplasma australiense.